We begin with the raw amino-acid sequence, 202 residues long: Imidazoleglycerol-phosphate dehydratase (202 aa).

The protein belongs to the imidazoleglycerol-phosphate dehydratase family.

It localises to the cytoplasm. It carries out the reaction D-erythro-1-(imidazol-4-yl)glycerol 3-phosphate = 3-(imidazol-4-yl)-2-oxopropyl phosphate + H2O. It participates in amino-acid biosynthesis; L-histidine biosynthesis; L-histidine from 5-phospho-alpha-D-ribose 1-diphosphate: step 6/9. This Synechococcus sp. (strain CC9605) protein is Imidazoleglycerol-phosphate dehydratase.